The primary structure comprises 324 residues: Bile salt hydrolase/transferase (324 aa).

Residue Cys-2 is the Nucleophile; acyl-thioester intermediate of the active site. Cys-2 and Arg-16 together coordinate deoxycholate. Asn-79 serves as a coordination point for taurine.

This sequence belongs to the peptidase C59 family. Homotetramer. The tetramer consists of a dimer of dimers.

It catalyses the reaction glycocholate + H2O = cholate + glycine. It carries out the reaction glycodeoxycholate + H2O = deoxycholate + glycine. The enzyme catalyses chenodeoxycholate + glycine = glycochenodeoxycholate + H2O. The catalysed reaction is cholate + taurine = taurocholate + H2O. It catalyses the reaction taurodeoxycholate + H2O = deoxycholate + taurine. It carries out the reaction taurochenodeoxycholate + H2O = chenodeoxycholate + taurine. The enzyme catalyses an L-alpha-amino acid + cholate = an N-choloyl-L-alpha-amino acid + H2O. The catalysed reaction is an L-alpha-amino acid + taurocholate = an N-choloyl-L-alpha-amino acid + taurine. It catalyses the reaction glycocholate + an L-alpha-amino acid = an N-choloyl-L-alpha-amino acid + glycine. It functions in the pathway lipid metabolism; bile acid biosynthesis. In terms of biological role, possesses dual functions in bile acid metabolism. Acts as a bile salt hydrolase that catalyzes the deconjugation of glycine- and taurine-linked bile salts, which occurs naturally in the intestines of animals, releasing amino acid residues and deconjugated bile salts (bile acids). Can hydrolyze the amide bond in the bile salts glycocholate (GCA), glycodeoxycholate (GDCA), glycochenodeoxycholate (GCDCA), taurocholate (TCA), taurodeoxycholate (TDCA) and taurochenodeoxycholate (TCDCA). Shows a preference for glycine-conjugated bile acids as substrates. Also acts as an amine N-acyltransferase that conjugates a wide variety of amino acids to conjugated and non-conjugated bile acids, thus producing bacterial bile acid amidates (BBAAs) - also named microbially conjugated bile acids (MCBAs) - in the gastrointestinal tract. These BBAAs may facilitate communication between the microbiota and host through the activation of host ligand-activated transcription factors. The sequence is that of Bile salt hydrolase/transferase from Lactiplantibacillus plantarum (strain ATCC BAA-793 / NCIMB 8826 / WCFS1) (Lactobacillus plantarum).